The primary structure comprises 185 residues: Large ribosomal subunit protein uL5 (185 aa).

The protein belongs to the universal ribosomal protein uL5 family. In terms of assembly, part of the 50S ribosomal subunit; part of the 5S rRNA/L5/L18/L25 subcomplex. Contacts the 5S rRNA and the P site tRNA. Forms a bridge to the 30S subunit in the 70S ribosome.

Its function is as follows. This is one of the proteins that bind and probably mediate the attachment of the 5S RNA into the large ribosomal subunit, where it forms part of the central protuberance. In the 70S ribosome it contacts protein S13 of the 30S subunit (bridge B1b), connecting the 2 subunits; this bridge is implicated in subunit movement. Contacts the P site tRNA; the 5S rRNA and some of its associated proteins might help stabilize positioning of ribosome-bound tRNAs. This is Large ribosomal subunit protein uL5 from Rhizobium rhizogenes (strain K84 / ATCC BAA-868) (Agrobacterium radiobacter).